A 21-amino-acid polypeptide reads, in one-letter code: Hemolymph 65 kDa lectin BG04 (21 aa).

Hemolymph.

The protein resides in the secreted. Binds and precipitates antigens of the parasite Echinostoma paraensei. This chain is Hemolymph 65 kDa lectin BG04 (BG04), found in Biomphalaria glabrata (Bloodfluke planorb).